Here is a 274-residue protein sequence, read N- to C-terminus: Putative hydro-lyase SAV_6940 (274 aa).

This sequence belongs to the D-glutamate cyclase family.

The polypeptide is Putative hydro-lyase SAV_6940 (Streptomyces avermitilis (strain ATCC 31267 / DSM 46492 / JCM 5070 / NBRC 14893 / NCIMB 12804 / NRRL 8165 / MA-4680)).